The sequence spans 293 residues: Ribosomal protein L11 methyltransferase (293 aa).

S-adenosyl-L-methionine contacts are provided by Thr-145, Gly-166, Asp-188, and Asn-230.

It belongs to the methyltransferase superfamily. PrmA family.

It localises to the cytoplasm. It catalyses the reaction L-lysyl-[protein] + 3 S-adenosyl-L-methionine = N(6),N(6),N(6)-trimethyl-L-lysyl-[protein] + 3 S-adenosyl-L-homocysteine + 3 H(+). Functionally, methylates ribosomal protein L11. In Shewanella piezotolerans (strain WP3 / JCM 13877), this protein is Ribosomal protein L11 methyltransferase.